Here is a 411-residue protein sequence, read N- to C-terminus: Allantoate amidohydrolase (411 aa).

His81, Asp92, Glu127, and His190 together coordinate Zn(2+). Allantoate is bound by residues Arg215, Asn275, and Arg288. Residue His382 participates in Zn(2+) binding.

It belongs to the peptidase M20 family. As to quaternary structure, homodimer. Requires Zn(2+) as cofactor.

The protein localises to the cytoplasm. It carries out the reaction allantoate + H2O + 2 H(+) = (S)-2-ureidoglycine + NH4(+) + CO2. Its pathway is nitrogen metabolism; (S)-allantoin degradation. Its activity is regulated as follows. Sulfate could be an allosteric effector of the enzyme that is responsible for stabilizing substrate binding. In addition, this anion effector may act as a counterion during enzyme-mediated catalysis. In terms of biological role, involved in the anaerobic nitrogen utilization via the assimilation of allantoin. Catalyzes specifically the hydrolysis of allantoate to yield CO2, NH3 and S-ureidoglycine, which is unstable and readily undergoes a second deamination by S-ureidoglycine aminohydrolase AllE to yield S-ureidoglycolate and NH3. In vivo, the spontaneous release of S-ureidoglycolate and ammonia from S-ureidoglycine appears to be too slow to sustain an efficient flux of nitrogen. The chain is Allantoate amidohydrolase from Escherichia coli (strain K12).